A 408-amino-acid polypeptide reads, in one-letter code: L,D-transpeptidase 2 (408 aa).

Residues 1–34 (MPKVGIAAQAGRTRVRRAWLTALMMTAVMIGAVA) form the signal peptide. C35 carries the N-palmitoyl cysteine lipid modification. C35 is lipidated: S-diacylglycerol cysteine. Residues D232, E235, and G236 each contribute to the Ca(2+) site. The region spanning 253-378 (VIATADDNTK…VKRGDIVEVV (126 aa)) is the L,D-TPase catalytic domain. Residues Y318 and 331–332 (SG) contribute to the substrate site. H336 (proton donor/acceptor) is an active-site residue. The active-site Nucleophile is the C354. N356 is a binding site for substrate.

Monomer.

Its subcellular location is the cell membrane. It participates in cell wall biogenesis; peptidoglycan biosynthesis. Its activity is regulated as follows. Is irreversibly inactivated by the beta-lactams carbapenems via the formation of a covalent adduct resulting from acylation of the catalytic Cys. In terms of biological role, generates 3-&gt;3 cross-links in peptidoglycan, catalyzing the cleavage of the mDap(3)-D-Ala(4) bond of a tetrapeptide donor stem and the formation of a bond between the carbonyl of mDap(3) of the donor stem and the side chain of mDap(3) of the acceptor stem. Is specific for donor substrates containing a stem tetrapeptide since it cannot use pentapeptide stems. Is essential for virulence in a mouse model of acute infection. The sequence is that of L,D-transpeptidase 2 (ldtB) from Mycobacterium tuberculosis (strain CDC 1551 / Oshkosh).